A 434-amino-acid chain; its full sequence is UDP-N-acetylmuramoylalanine--D-glutamate ligase (434 aa).

113 to 119 (GSNGKST) contacts ATP.

This sequence belongs to the MurCDEF family.

It is found in the cytoplasm. It carries out the reaction UDP-N-acetyl-alpha-D-muramoyl-L-alanine + D-glutamate + ATP = UDP-N-acetyl-alpha-D-muramoyl-L-alanyl-D-glutamate + ADP + phosphate + H(+). It functions in the pathway cell wall biogenesis; peptidoglycan biosynthesis. Functionally, cell wall formation. Catalyzes the addition of glutamate to the nucleotide precursor UDP-N-acetylmuramoyl-L-alanine (UMA). The chain is UDP-N-acetylmuramoylalanine--D-glutamate ligase from Pasteurella multocida (strain Pm70).